Reading from the N-terminus, the 69-residue chain is Putative F-box protein At2g33705 (69 aa).

The F-box domain maps to 14–59 (GVNLEQIPYDLVLEILLKLSAKSIARFRCVSKLWDSTFRSRYFTEL).

The sequence is that of Putative F-box protein At2g33705 from Arabidopsis thaliana (Mouse-ear cress).